Reading from the N-terminus, the 410-residue chain is Beta-arrestin-2 (410 aa).

A Phosphotyrosine modification is found at tyrosine 48. Proline 176 and proline 181 each carry hydroxyproline; by PHD2. Residues 241–410 (ADICLFSTAQ…KDDDCDDQFC (170 aa)) are interaction with TRAF6. The residue at position 361 (serine 361) is a Phosphoserine. An interaction with AP2B1 region spans residues 378 to 410 (DTNYATDDDIVFEDFARLRLKGMKDDDCDDQFC). Threonine 383 is modified (phosphothreonine; by CaMK2). The short motif at 386–396 (DIVFEDFARLR) is the [DE]-X(1,2)-F-X-X-[FL]-X-X-X-R motif element.

The protein belongs to the arrestin family. As to quaternary structure, homooligomer; the self-association is mediated by InsP6-binding. Heterooligomer with ARRB1; the association is mediated by InsP6-binding. Interacts with ADRB2 and CHRM2. Interacts with PDE4A. Interacts with PDE4D. Interacts with MAPK10, MAPK1 and MAPK3. Interacts with DRD2. Interacts with FSHR. Interacts with CLTC. Interacts with HTR2C. Interacts with CCR5. Interacts with CXCR4. Interacts with SRC. Interacts with DUSP16; the interaction is interrupted by stimulation of AGTR1 and activation of MAPK10. Interacts with CHUK; the interaction is enhanced stimulation of ADRB2. Interacts with RELA. Interacts with MDM2; the interaction is enhanced by activation of GPCRs. Interacts with SLC9A5. Interacts with TRAF6. Interacts with IGF1R. Interacts with ENG. Interacts with KIR2DL1, KIR2DL3 and KIR2DL4. Interacts with LDLR. Interacts with AP2B1. Interacts with C5AR1. Interacts with RAF1. Interacts with MAP2K1. Interacts with MAPK1. Interacts with MAPK10; the interaction enhances MAPK10 activation by MAP3K5. Interacts with MAP2K4; the interaction is enhanced by presence of MAP3K5 and MAPK10. Interacts with MAP3K5. Interacts with AKT1. Interacts with IKBKB and MAP3K14. Interacts with SMO (activated). Interacts with GSK3A and GSK3B. Associates with protein phosphatase 2A (PP2A). Interacts with CXCR4; the interaction is dependent on C-terminal phosphorylation of CXCR4 and allows activation of MAPK1 and MAPK3. Interacts with GPR143. Interacts with HCK and CXCR1 (phosphorylated). Interacts with ACKR3 and ACKR4. Interacts with ARRDC1; the interaction is direct. Interacts with GPR61, GPR62 and GPR135. Interacts (via NACHT and LRR domains) with NLRP3; this interaction is direct and inducible by omega-3 polyunsaturated fatty acids (PUFAs). Interacts with FFAR4 (via C-terminus); this interaction is stimulated by long-chain fatty acids (LCFAs). Interacts with GPR35. Interacts with GPR84. Interacts with TIGIT; this interaction inhibits the NF-kappa-B pathway. Interacts with TGFBR3. In terms of processing, phosphorylated at Thr-383 in the cytoplasm; probably dephosphorylated at the plasma membrane. The phosphorylation does not regulate internalization and recycling of ADRB2, interaction with clathrin or AP2B1. The ubiquitination status appears to regulate the formation and trafficking of beta-arrestin-GPCR complexes and signaling. Ubiquitination appears to occur GPCR-specific. Ubiquitinated by MDM2; the ubiquitination is required for rapid internalization of ADRB2. Deubiquitinated by USP33; the deubiquitination leads to a dissociation of the beta-arrestin-GPCR complex. Stimulation of a class A GPCR, such as ADRB2, induces transient ubiquitination and subsequently promotes association with USP33. Stimulation of a class B GPCR promotes a sustained ubiquitination. Deubiquitinated by USP20; allowing USP20 to deubiquitinate TRAF6 leading to inhibition of NF-kappa-B signaling. Post-translationally, hydroxylation by PHD2 modulates the rate of internalization by slowing down recruitment to the plasma membrane and inhibiting subsequent co-internalization with class A receptors. Predominantly localized in neuronal tissues and in the spleen.

Its subcellular location is the cytoplasm. It localises to the nucleus. The protein localises to the cell membrane. The protein resides in the membrane. It is found in the clathrin-coated pit. Its subcellular location is the cytoplasmic vesicle. Functions in regulating agonist-mediated G-protein coupled receptor (GPCR) signaling by mediating both receptor desensitization and resensitization processes. During homologous desensitization, beta-arrestins bind to the GPRK-phosphorylated receptor and sterically preclude its coupling to the cognate G-protein; the binding appears to require additional receptor determinants exposed only in the active receptor conformation. The beta-arrestins target many receptors for internalization by acting as endocytic adapters (CLASPs, clathrin-associated sorting proteins) and recruiting the GPRCs to the adapter protein 2 complex 2 (AP-2) in clathrin-coated pits (CCPs). However, the extent of beta-arrestin involvement appears to vary significantly depending on the receptor, agonist and cell type. Internalized arrestin-receptor complexes traffic to intracellular endosomes, where they remain uncoupled from G-proteins. Two different modes of arrestin-mediated internalization occur. Class A receptors, like ADRB2, OPRM1, ENDRA, D1AR and ADRA1B dissociate from beta-arrestin at or near the plasma membrane and undergo rapid recycling. Class B receptors, like AVPR2, AGTR1, NTSR1, TRHR and TACR1 internalize as a complex with arrestin and traffic with it to endosomal vesicles, presumably as desensitized receptors, for extended periods of time. Receptor resensitization then requires that receptor-bound arrestin is removed so that the receptor can be dephosphorylated and returned to the plasma membrane. Mediates endocytosis of CCR7 following ligation of CCL19 but not CCL21. Involved in internalization of P2RY1, P2RY4, P2RY6 and P2RY11 and ATP-stimulated internalization of P2RY2. Involved in phosphorylation-dependent internalization of OPRD1 and subsequent recycling or degradation. Involved in ubiquitination of IGF1R. Beta-arrestins function as multivalent adapter proteins that can switch the GPCR from a G-protein signaling mode that transmits short-lived signals from the plasma membrane via small molecule second messengers and ion channels to a beta-arrestin signaling mode that transmits a distinct set of signals that are initiated as the receptor internalizes and transits the intracellular compartment. Acts as a signaling scaffold for MAPK pathways such as MAPK1/3 (ERK1/2) and MAPK10 (JNK3). ERK1/2 and JNK3 activated by the beta-arrestin scaffold are largely excluded from the nucleus and confined to cytoplasmic locations such as endocytic vesicles, also called beta-arrestin signalosomes. Acts as a signaling scaffold for the AKT1 pathway. GPCRs for which the beta-arrestin-mediated signaling relies on both ARRB1 and ARRB2 (codependent regulation) include ADRB2, F2RL1 and PTH1R. For some GPCRs the beta-arrestin-mediated signaling relies on either ARRB1 or ARRB2 and is inhibited by the other respective beta-arrestin form (reciprocal regulation). Increases ERK1/2 signaling in AGTR1- and AVPR2-mediated activation (reciprocal regulation). Involved in CCR7-mediated ERK1/2 signaling involving ligand CCL19. Is involved in type-1A angiotensin II receptor/AGTR1-mediated ERK activity. Is involved in type-1A angiotensin II receptor/AGTR1-mediated MAPK10 activity. Is involved in dopamine-stimulated AKT1 activity in the striatum by disrupting the association of AKT1 with its negative regulator PP2A. Involved in AGTR1-mediated chemotaxis. Appears to function as signaling scaffold involved in regulation of MIP-1-beta-stimulated CCR5-dependent chemotaxis. Involved in attenuation of NF-kappa-B-dependent transcription in response to GPCR or cytokine stimulation by interacting with and stabilizing CHUK. Suppresses UV-induced NF-kappa-B-dependent activation by interacting with CHUK. The function is promoted by stimulation of ADRB2 and dephosphorylation of ARRB2. Involved in IL8-mediated granule release in neutrophils. Involved in p53/TP53-mediated apoptosis by regulating MDM2 and reducing the MDM2-mediated degradation of p53/TP53. May serve as nuclear messenger for GPCRs. Upon stimulation of OR1D2, may be involved in regulation of gene expression during the early processes of fertilization. Also involved in regulation of receptors other than GPCRs. Involved in endocytosis of TGFBR2 and TGFBR3 and down-regulates TGF-beta signaling such as NF-kappa-B activation. Involved in endocytosis of low-density lipoprotein receptor/LDLR. Involved in endocytosis of smoothened homolog/Smo, which also requires GRK2. Involved in endocytosis of SLC9A5. Involved in endocytosis of ENG and subsequent TGF-beta-mediated ERK activation and migration of epithelial cells. Involved in Toll-like receptor and IL-1 receptor signaling through the interaction with TRAF6 which prevents TRAF6 autoubiquitination and oligomerization required for activation of NF-kappa-B and JUN. Involved in insulin resistance by acting as insulin-induced signaling scaffold for SRC, AKT1 and INSR. Involved in regulation of inhibitory signaling of natural killer cells by recruiting PTPN6 and PTPN11 to KIR2DL1. Involved in the internalization of the atypical chemokine receptor ACKR3. Acts as an adapter protein coupling FFAR4 receptor to specific downstream signaling pathways, as well as mediating receptor endocytosis. During the activation step of NLRP3 inflammasome, directly associates with NLRP3 leading to inhibition of pro-inflammatory cytokine release and inhibition of inflammation. The polypeptide is Beta-arrestin-2 (Arrb2) (Rattus norvegicus (Rat)).